The primary structure comprises 571 residues: Urease subunit alpha (571 aa).

Residues 133 to 571 (GGIDTHIHFV…LPLAQRYFLF (439 aa)) enclose the Urease domain. The Ni(2+) site is built by His138, His140, and Lys221. N6-carboxylysine is present on Lys221. His223 contributes to the substrate binding site. Ni(2+) contacts are provided by His250 and His276. The Proton donor role is filled by His324. Position 364 (Asp364) interacts with Ni(2+).

The protein belongs to the metallo-dependent hydrolases superfamily. Urease alpha subunit family. As to quaternary structure, heterotrimer of UreA (gamma), UreB (beta) and UreC (alpha) subunits. Three heterotrimers associate to form the active enzyme. Ni cation serves as cofactor. Post-translationally, carboxylation allows a single lysine to coordinate two nickel ions.

The protein localises to the cytoplasm. The enzyme catalyses urea + 2 H2O + H(+) = hydrogencarbonate + 2 NH4(+). The protein operates within nitrogen metabolism; urea degradation; CO(2) and NH(3) from urea (urease route): step 1/1. The polypeptide is Urease subunit alpha (Anaeromyxobacter sp. (strain K)).